Reading from the N-terminus, the 215-residue chain is Probable transaldolase (215 aa).

The active-site Schiff-base intermediate with substrate is the lysine 83.

This sequence belongs to the transaldolase family. Type 3B subfamily.

The protein resides in the cytoplasm. The enzyme catalyses D-sedoheptulose 7-phosphate + D-glyceraldehyde 3-phosphate = D-erythrose 4-phosphate + beta-D-fructose 6-phosphate. It functions in the pathway carbohydrate degradation; pentose phosphate pathway; D-glyceraldehyde 3-phosphate and beta-D-fructose 6-phosphate from D-ribose 5-phosphate and D-xylulose 5-phosphate (non-oxidative stage): step 2/3. Functionally, transaldolase is important for the balance of metabolites in the pentose-phosphate pathway. This Clostridium perfringens (strain SM101 / Type A) protein is Probable transaldolase.